Here is a 147-residue protein sequence, read N- to C-terminus: Protein PBDC1 homolog (147 aa).

It belongs to the PBDC1 family.

It localises to the cytoplasm. The protein localises to the nucleus. The chain is Protein PBDC1 homolog from Schizosaccharomyces pombe (strain 972 / ATCC 24843) (Fission yeast).